A 448-amino-acid polypeptide reads, in one-letter code: Extracellular serine protease (448 aa).

A signal peptide spans 1–20; it reads MKLSHLSLAIISAITLAACG. The tract at residues 87–109 is disordered; it reads KELENQASDDEVDPTKTGVVGNL.

Belongs to the peptidase S17 family. Requires a divalent metal cation as cofactor.

In terms of biological role, this enzyme is a chymotrypsin-like serine protease. Degrades a variety of substrates present in the skin and hoof of the sheep, including elastin, keratin, fibrinogen and collagen. It seems to play an important role in the pathogenesis of sheep footrot. The protein is Extracellular serine protease (prvA) of Dichelobacter nodosus (Bacteroides nodosus).